The sequence spans 107 residues: Toxin MT2730 (107 aa).

The disordered stretch occupies residues 1 to 42 (MTHKRTKRQPAIAAGLNAPRRNRVGRQHGWPADVPSAEQRRA).

Functionally, toxic component of a type II toxin-antitoxin (TA) system. Its toxic effect is neutralized by coexpression with cognate antitoxin MT2731. The polypeptide is Toxin MT2730 (Mycobacterium tuberculosis (strain CDC 1551 / Oshkosh)).